The chain runs to 416 residues: Serine hydroxymethyltransferase (416 aa).

Residues L121 and 125-127 (GHL) each bind (6S)-5,6,7,8-tetrahydrofolate. K229 is subject to N6-(pyridoxal phosphate)lysine.

This sequence belongs to the SHMT family. Homodimer. It depends on pyridoxal 5'-phosphate as a cofactor.

Its subcellular location is the cytoplasm. The enzyme catalyses (6R)-5,10-methylene-5,6,7,8-tetrahydrofolate + glycine + H2O = (6S)-5,6,7,8-tetrahydrofolate + L-serine. The protein operates within one-carbon metabolism; tetrahydrofolate interconversion. It participates in amino-acid biosynthesis; glycine biosynthesis; glycine from L-serine: step 1/1. Its function is as follows. Catalyzes the reversible interconversion of serine and glycine with tetrahydrofolate (THF) serving as the one-carbon carrier. This reaction serves as the major source of one-carbon groups required for the biosynthesis of purines, thymidylate, methionine, and other important biomolecules. Also exhibits THF-independent aldolase activity toward beta-hydroxyamino acids, producing glycine and aldehydes, via a retro-aldol mechanism. This Dechloromonas aromatica (strain RCB) protein is Serine hydroxymethyltransferase.